Here is a 128-residue protein sequence, read N- to C-terminus: Large ribosomal subunit protein bL17 (128 aa).

It belongs to the bacterial ribosomal protein bL17 family. As to quaternary structure, part of the 50S ribosomal subunit. Contacts protein L32.

This chain is Large ribosomal subunit protein bL17, found in Streptococcus sanguinis (strain SK36).